The chain runs to 890 residues: Serine/threonine-protein kinase greatwall (890 aa).

The Protein kinase domain occupies 33–846 (FSIVKPISRG…LKDLKAHHLF (814 aa)). ATP-binding positions include 39–47 (ISRGAFGKV) and lysine 62. Aspartate 156 acts as the Proton acceptor in catalysis. Disordered stretches follow at residues 324-353 (AEAPPYLNSSRVKDCSSEQARSKKPMGSSA), 412-434 (HKDLGKDDQGELEKLTISPDSPP), 517-541 (NYASDRKSEDDYISAPRTHENLGSG), 559-592 (DGEANSNSGCEEGENQKESLNQDSESSSADMSVT), and 609-628 (ELSFEESPSESNEETTPENK). A compositionally biased stretch (basic and acidic residues) spans 412–425 (HKDLGKDDQGELEK). Over residues 576–592 (ESLNQDSESSSADMSVT) the composition is skewed to polar residues. A compositionally biased stretch (acidic residues) spans 615-624 (SPSESNEETT). A Phosphothreonine; by CDK1 modification is found at threonine 752. In terms of domain architecture, AGC-kinase C-terminal spans 847-890 (HAIEWDDLQNLPMPFIPQPDDETDTTYFEARNNAQHLKVSGFSL).

This sequence belongs to the protein kinase superfamily. AGC Ser/Thr protein kinase family. Phosphorylation at Thr-752 by CDK1 during M phase activates its kinase activity. Maximum phosphorylation occurs in prometaphase.

The protein localises to the cytoplasm. It localises to the cytoskeleton. The protein resides in the microtubule organizing center. It is found in the centrosome. Its subcellular location is the nucleus. It catalyses the reaction L-seryl-[protein] + ATP = O-phospho-L-seryl-[protein] + ADP + H(+). It carries out the reaction L-threonyl-[protein] + ATP = O-phospho-L-threonyl-[protein] + ADP + H(+). Functionally, serine/threonine kinase that plays a key role in M phase by acting as a regulator of mitosis entry and maintenance. Acts by promoting the inactivation of protein phosphatase 2A (PP2A) during M phase: does not directly inhibit PP2A but acts by mediating phosphorylation and subsequent activation of arpp19 and ensa at 'Ser-67', 2 phosphatase inhibitors that specifically inhibit the ppp2r2d (PR55-delta) subunit of PP2A. Inactivation of PP2A during M phase is essential to keep cyclin-B1-CDK1 activity high. Following DNA damage, it is also involved in checkpoint recovery by being inhibited. This is Serine/threonine-protein kinase greatwall (mastl) from Xenopus tropicalis (Western clawed frog).